Consider the following 340-residue polypeptide: Anthranilate phosphoribosyltransferase (340 aa).

5-phospho-alpha-D-ribose 1-diphosphate-binding positions include glycine 82, 85-86 (GD), threonine 90, 92-95 (NISS), 110-118 (KHGGRSVSS), and alanine 122. Glycine 82 serves as a coordination point for anthranilate. Serine 94 is a Mg(2+) binding site. Arginine 168 lines the anthranilate pocket. Residues aspartate 227 and glutamate 228 each coordinate Mg(2+).

It belongs to the anthranilate phosphoribosyltransferase family. As to quaternary structure, homodimer. It depends on Mg(2+) as a cofactor.

It carries out the reaction N-(5-phospho-beta-D-ribosyl)anthranilate + diphosphate = 5-phospho-alpha-D-ribose 1-diphosphate + anthranilate. It functions in the pathway amino-acid biosynthesis; L-tryptophan biosynthesis; L-tryptophan from chorismate: step 2/5. Functionally, catalyzes the transfer of the phosphoribosyl group of 5-phosphorylribose-1-pyrophosphate (PRPP) to anthranilate to yield N-(5'-phosphoribosyl)-anthranilate (PRA). This is Anthranilate phosphoribosyltransferase from Dechloromonas aromatica (strain RCB).